Here is a 506-residue protein sequence, read N- to C-terminus: Cobyric acid synthase (506 aa).

Residues 251–448 form the GATase cobBQ-type domain; sequence DITIAIVQLP…LHGLFDSDAF (198 aa). Cys-332 acts as the Nucleophile in catalysis. His-440 is an active-site residue.

This sequence belongs to the CobB/CobQ family. CobQ subfamily.

Its pathway is cofactor biosynthesis; adenosylcobalamin biosynthesis. Functionally, catalyzes amidations at positions B, D, E, and G on adenosylcobyrinic A,C-diamide. NH(2) groups are provided by glutamine, and one molecule of ATP is hydrogenolyzed for each amidation. The polypeptide is Cobyric acid synthase (Salmonella arizonae (strain ATCC BAA-731 / CDC346-86 / RSK2980)).